Here is a 359-residue protein sequence, read N- to C-terminus: Heat-inducible transcription repressor HrcA (359 aa).

The protein belongs to the HrcA family.

Functionally, negative regulator of class I heat shock genes (grpE-dnaK-dnaJ and groELS operons). Prevents heat-shock induction of these operons. This Sinorhizobium fredii (strain NBRC 101917 / NGR234) protein is Heat-inducible transcription repressor HrcA.